Consider the following 293-residue polypeptide: tRNA pseudouridine synthase B (293 aa).

The active-site Nucleophile is Asp39.

Belongs to the pseudouridine synthase TruB family. Type 1 subfamily.

The enzyme catalyses uridine(55) in tRNA = pseudouridine(55) in tRNA. In terms of biological role, responsible for synthesis of pseudouridine from uracil-55 in the psi GC loop of transfer RNAs. This Rickettsia bellii (strain RML369-C) protein is tRNA pseudouridine synthase B.